The following is a 241-amino-acid chain: 2,3,4,5-tetrahydropyridine-2,6-dicarboxylate N-acetyltransferase (241 aa).

This sequence belongs to the transferase hexapeptide repeat family. DapH subfamily.

It carries out the reaction (S)-2,3,4,5-tetrahydrodipicolinate + acetyl-CoA + H2O = L-2-acetamido-6-oxoheptanedioate + CoA. The protein operates within amino-acid biosynthesis; L-lysine biosynthesis via DAP pathway; LL-2,6-diaminopimelate from (S)-tetrahydrodipicolinate (acetylase route): step 1/3. Functionally, catalyzes the transfer of an acetyl group from acetyl-CoA to tetrahydrodipicolinate. The protein is 2,3,4,5-tetrahydropyridine-2,6-dicarboxylate N-acetyltransferase of Thermoanaerobacter sp. (strain X514).